The primary structure comprises 108 residues: Glutaredoxin-like protein YDR286C homolog (108 aa).

C22 and C25 are joined by a disulfide.

This sequence belongs to the glutaredoxin family. YDR286C subfamily.

The chain is Glutaredoxin-like protein YDR286C homolog from Dictyostelium discoideum (Social amoeba).